Here is a 33-residue protein sequence, read N- to C-terminus: MRTYNPNSLLPSQMQKCTCVFLHPAFDLCGGEA.

It to E.coli ylcH.

This is an uncharacterized protein from Enterobacteria phage 82 (Bacteriophage 82).